The chain runs to 201 residues: UPF0301 protein R00917 (201 aa).

This sequence belongs to the UPF0301 (AlgH) family.

The protein is UPF0301 protein R00917 of Rhizobium meliloti (strain 1021) (Ensifer meliloti).